A 349-amino-acid chain; its full sequence is tRNA N6-adenosine threonylcarbamoyltransferase (349 aa).

H114 and H118 together coordinate Fe cation. Residues 136–140 (IMSGG), D169, G182, and N280 each bind substrate. Fe cation is bound at residue D308.

This sequence belongs to the KAE1 / TsaD family. Requires Fe(2+) as cofactor.

The protein localises to the cytoplasm. It catalyses the reaction L-threonylcarbamoyladenylate + adenosine(37) in tRNA = N(6)-L-threonylcarbamoyladenosine(37) in tRNA + AMP + H(+). Functionally, required for the formation of a threonylcarbamoyl group on adenosine at position 37 (t(6)A37) in tRNAs that read codons beginning with adenine. Is involved in the transfer of the threonylcarbamoyl moiety of threonylcarbamoyl-AMP (TC-AMP) to the N6 group of A37, together with TsaE and TsaB. TsaD likely plays a direct catalytic role in this reaction. The chain is tRNA N6-adenosine threonylcarbamoyltransferase from Ehrlichia chaffeensis (strain ATCC CRL-10679 / Arkansas).